The chain runs to 240 residues: Probable septum site-determining protein MinC (240 aa).

It belongs to the MinC family. As to quaternary structure, interacts with MinD and FtsZ.

Functionally, cell division inhibitor that blocks the formation of polar Z ring septums. Rapidly oscillates between the poles of the cell to destabilize FtsZ filaments that have formed before they mature into polar Z rings. Prevents FtsZ polymerization. The chain is Probable septum site-determining protein MinC from Acinetobacter baylyi (strain ATCC 33305 / BD413 / ADP1).